We begin with the raw amino-acid sequence, 518 residues long: Probable cytochrome P450 317a1 (518 aa).

Cys-461 lines the heme pocket.

This sequence belongs to the cytochrome P450 family. Heme is required as a cofactor.

The protein resides in the endoplasmic reticulum membrane. It is found in the microsome membrane. In terms of biological role, may be involved in the metabolism of insect hormones and in the breakdown of synthetic insecticides. The chain is Probable cytochrome P450 317a1 (Cyp317a1) from Drosophila melanogaster (Fruit fly).